The following is a 432-amino-acid chain: Keratin, type I cytoskeletal 17 (432 aa).

A disordered region spans residues 1-24; sequence MTTSIRQFTSSSSIKGSSGLGGGS. The segment at 1–83 is head; it reads MTTSIRQFTS…GGVDGLLAGG (83 aa). Phosphoserine occurs at positions 12 and 13. Residue lysine 15 forms a Glycyl lysine isopeptide (Lys-Gly) (interchain with G-Cter in SUMO1); alternate linkage. A Glycyl lysine isopeptide (Lys-Gly) (interchain with G-Cter in SUMO2); alternate cross-link involves residue lysine 15. Serine 25, serine 32, and serine 39 each carry phosphoserine. Serine 44 carries the phosphoserine; by RPS6KA1 modification. Residues 84-120 form a coil 1A region; it reads EKATMQNLNDRLASYLDKVRALEEANTELEVKIRDWY. The 312-residue stretch at 84–395 folds into the IF rod domain; sequence EKATMQNLND…RLLEGEDAHL (312 aa). The interval 102–116 is peptide epitope S1; induces T-cell and keratinocyte proliferation and IFN-gamma production; sequence VRALEEANTELEVKI. Threonine 110 is modified (phosphothreonine). The segment at 121–138 is linker 1; sequence QRQAPGPARDYSQYYRTI. Residues 139–230 form a coil 1B region; that stretch reads EELQNKILTA…NHEEEMNALR (92 aa). The tract at residues 153–167 is peptide epitope S2; induces T-cell proliferation and IFN-gamma production; sequence ANILLQIDNARLAAD. Residues 231-250 are linker 12; it reads GQVGGEINVEMDAAPGVDLS. A coil 2 region spans residues 251-392; it reads RILNEMRDQY…TYRRLLEGED (142 aa). A Glycyl lysine isopeptide (Lys-Gly) (interchain with G-Cter in SUMO2) cross-link involves residue lysine 278. Phosphothreonine is present on threonine 279. Serine 323 bears the Phosphoserine mark. The segment at 332–346 is peptide epitope S4; induces T-cell and keratinocyte proliferation and IFN-gamma production; it reads ENRYCVQLSQIQGLI. Positions 393-432 are tail; that stretch reads AHLTQYKKEPVTTRQVRTIVEEVQDGKVISSREQVHQTTR. Glycyl lysine isopeptide (Lys-Gly) (interchain with G-Cter in SUMO1); alternate cross-links involve residues lysine 399, lysine 400, and lysine 419. Glycyl lysine isopeptide (Lys-Gly) (interchain with G-Cter in SUMO2); alternate cross-links involve residues lysine 399, lysine 400, and lysine 419.

This sequence belongs to the intermediate filament family. Heterodimer of a type I and a type II keratin. KRT17 associates with KRT6 isomers (KRT6A or KRT6B). Interacts with TRADD and SFN. Post-translationally, phosphorylation at Ser-44 occurs in a growth- and stress-dependent fashion in skin keratinocytes, it has no effect on filament organization. As to expression, expressed in the outer root sheath and medulla region of hair follicle specifically from eyebrow and beard, digital pulp, nail matrix and nail bed epithelium, mucosal stratified squamous epithelia and in basal cells of oral epithelium, palmoplantar epidermis and sweat and mammary glands. Also expressed in myoepithelium of prostate, basal layer of urinary bladder, cambial cells of sebaceous gland and in exocervix (at protein level).

Its subcellular location is the cytoplasm. Functionally, type I keratin involved in the formation and maintenance of various skin appendages, specifically in determining shape and orientation of hair. Required for the correct growth of hair follicles, in particular for the persistence of the anagen (growth) state. Modulates the function of TNF-alpha in the specific context of hair cycling. Regulates protein synthesis and epithelial cell growth through binding to the adapter protein SFN and by stimulating Akt/mTOR pathway. Involved in tissue repair. May be a marker of basal cell differentiation in complex epithelia and therefore indicative of a certain type of epithelial 'stem cells'. Acts as a promoter of epithelial proliferation by acting a regulator of immune response in skin: promotes Th1/Th17-dominated immune environment contributing to the development of basaloid skin tumors. May act as an autoantigen in the immunopathogenesis of psoriasis, with certain peptide regions being a major target for autoreactive T-cells and hence causing their proliferation. The sequence is that of Keratin, type I cytoskeletal 17 (KRT17) from Homo sapiens (Human).